The chain runs to 1463 residues: DNA-directed RNA polymerase subunit beta'' (1463 aa).

Zn(2+)-binding residues include Cys239, Cys312, Cys319, and Cys322. Disordered stretches follow at residues 836 to 869 (TFTG…ETRM) and 987 to 1007 (TNRS…AQAR). The span at 860-869 (AANSSHETRM) shows a compositional bias: polar residues. Basic residues predominate over residues 987 to 996 (TNRSKTRRNA). A compositionally biased stretch (polar residues) spans 997–1007 (SGKTQVKAQAR).

The protein belongs to the RNA polymerase beta' chain family. RpoC2 subfamily. In terms of assembly, in plastids the minimal PEP RNA polymerase catalytic core is composed of four subunits: alpha, beta, beta', and beta''. When a (nuclear-encoded) sigma factor is associated with the core the holoenzyme is formed, which can initiate transcription. Requires Zn(2+) as cofactor.

Its subcellular location is the plastid. The protein resides in the chloroplast. The catalysed reaction is RNA(n) + a ribonucleoside 5'-triphosphate = RNA(n+1) + diphosphate. Functionally, DNA-dependent RNA polymerase catalyzes the transcription of DNA into RNA using the four ribonucleoside triphosphates as substrates. This Nephroselmis olivacea (Green alga) protein is DNA-directed RNA polymerase subunit beta''.